The primary structure comprises 232 residues: Vesicle transport through interaction with t-SNAREs homolog 1B (232 aa).

Alanine 2 carries the post-translational modification N-acetylalanine. 2 interaction with CLINT1 regions span residues 2–23 (ATSAASSEHFEKLHEIFRGLHE) and 69–73 (APLSF). The Cytoplasmic segment spans residues 2 to 208 (ATSAASSEHF…SRKVTTNKLL (207 aa)). Positions 35–98 (MAGTEEKKKL…AKLHREVRST (64 aa)) form a coiled coil. Threonine 103 carries the post-translational modification Phosphothreonine. An Omega-N-methylarginine modification is found at arginine 107. At serine 138 the chain carries Phosphoserine. Residues 161-198 (SEIIEELGEQRDQLERTKSRLVNTSENLSKSRKILRSM) are a coiled coil. Residues 209–229 (LSIVILLELAILGGLVYYKFL) form a helical; Anchor for type IV membrane protein membrane-spanning segment. The Vesicular portion of the chain corresponds to 230 to 232 (RRH).

Belongs to the VTI1 family. In terms of assembly, forms a SNARE complex with STX7, STX8 and VAMP8 which functions in the homotypic fusion of late endosomes. Component of the SNARE complex composed of STX7, STX8, VAMP7 and VIT1B that is required for heterotypic fusion of late endosomes with lysosomes. May interact with STX17. Interacts with CLINT1.

It is found in the early endosome membrane. The protein localises to the late endosome membrane. It localises to the lysosome membrane. The protein resides in the cytoplasmic granule. Its subcellular location is the recycling endosome membrane. V-SNARE that mediates vesicle transport pathways through interactions with t-SNAREs on the target membrane. These interactions are proposed to mediate aspects of the specificity of vesicle trafficking and to promote fusion of the lipid bilayers. May be concerned with increased secretion of cytokines associated with cellular senescence. This is Vesicle transport through interaction with t-SNAREs homolog 1B (VTI1B) from Bos taurus (Bovine).